Reading from the N-terminus, the 261-residue chain is NAD-capped RNA hydrolase NudC (261 aa).

Residue Arg74 participates in substrate binding. Positions 103, 106, 121, and 124 each coordinate Zn(2+). Tyr129 is a binding site for substrate. Residues 130–253 (PRIFPCIIVA…TIARALIEQT (124 aa)) enclose the Nudix hydrolase domain. Ala163, Glu179, and Glu183 together coordinate a divalent metal cation. The Nudix box signature appears at 164–185 (GFVEVGETLEQCVAREVKEETG). A substrate-binding site is contributed by 197-204 (QPWAFPSS). Glu224 contributes to the a divalent metal cation binding site. Ala246 lines the substrate pocket.

It belongs to the Nudix hydrolase family. NudC subfamily. As to quaternary structure, homodimer. Requires Mg(2+) as cofactor. The cofactor is Mn(2+). It depends on Zn(2+) as a cofactor.

It carries out the reaction a 5'-end NAD(+)-phospho-ribonucleoside in mRNA + H2O = a 5'-end phospho-adenosine-phospho-ribonucleoside in mRNA + beta-nicotinamide D-ribonucleotide + 2 H(+). The enzyme catalyses NAD(+) + H2O = beta-nicotinamide D-ribonucleotide + AMP + 2 H(+). It catalyses the reaction NADH + H2O = reduced beta-nicotinamide D-ribonucleotide + AMP + 2 H(+). Its function is as follows. mRNA decapping enzyme that specifically removes the nicotinamide adenine dinucleotide (NAD) cap from a subset of mRNAs by hydrolyzing the diphosphate linkage to produce nicotinamide mononucleotide (NMN) and 5' monophosphate mRNA. The NAD-cap is present at the 5'-end of some mRNAs and stabilizes RNA against 5'-processing. Has preference for mRNAs with a 5'-end purine. Catalyzes the hydrolysis of a broad range of dinucleotide pyrophosphates. This chain is NAD-capped RNA hydrolase NudC, found in Vibrio vulnificus (strain CMCP6).